A 238-amino-acid chain; its full sequence is MRPNARAINQPRPIKITRHYTKHAEGSVLVEFGETKVICTATVEDSVPRFLKGQGKGWVTAEYGMLPRSTHSRMQREAAKGKQGGRTMEIQRLIARSLRAMVDLEALGERAITLDCDVIQADGGTRTASITGACVALIDAINFLLQNGTLTTNPIKGLVAAISVGIVNGETVCDLEYVEDSIAETDMNVVMMEDGRMIEVQGTAEGEPFSHAELLTLLDLAKQGCEQLFVAQRVALAE.

Residues R86 and 124–126 (GTR) each bind phosphate.

This sequence belongs to the RNase PH family. In terms of assembly, homohexameric ring arranged as a trimer of dimers.

The catalysed reaction is tRNA(n+1) + phosphate = tRNA(n) + a ribonucleoside 5'-diphosphate. Functionally, phosphorolytic 3'-5' exoribonuclease that plays an important role in tRNA 3'-end maturation. Removes nucleotide residues following the 3'-CCA terminus of tRNAs; can also add nucleotides to the ends of RNA molecules by using nucleoside diphosphates as substrates, but this may not be physiologically important. Probably plays a role in initiation of 16S rRNA degradation (leading to ribosome degradation) during starvation. The protein is Ribonuclease PH of Histophilus somni (strain 2336) (Haemophilus somnus).